Here is a 261-residue protein sequence, read N- to C-terminus: Ice-binding protein (261 aa).

Residues 1–20 (MSLLSIITIGLAGLGGLVNG) form the signal peptide. An N-linked (GlcNAc...) asparagine glycan is attached at Asn185.

Belongs to the ice-binding protein family. In terms of assembly, homodimer. Dimerization is not required for the thermal hysteresis (TH) activity. Post-translationally, glycosylated. Glycosylation is not required for the thermal hysteresis (TH) activity. Glycosylation may increase stability and secretion of this protein.

It is found in the secreted. Confers freeze tolerance. Binds to the surface of ice crystals and inhibits their growth. Has low thermal hysteresis (TH) activity, which is the ability to lower the freezing point of an aqueous solution below its melting point. The TH activity of this protein is approximately 0.2 degrees Celsius at 50 uM and 0.3 degrees Celsius at 400 uM. This Leucosporidium sp. (strain AY30) (Arctic yeast) protein is Ice-binding protein.